Reading from the N-terminus, the 118-residue chain is Putative pterin-4-alpha-carbinolamine dehydratase (118 aa).

The protein belongs to the pterin-4-alpha-carbinolamine dehydratase family.

The enzyme catalyses (4aS,6R)-4a-hydroxy-L-erythro-5,6,7,8-tetrahydrobiopterin = (6R)-L-erythro-6,7-dihydrobiopterin + H2O. This chain is Putative pterin-4-alpha-carbinolamine dehydratase, found in Pseudomonas putida (strain ATCC 700007 / DSM 6899 / JCM 31910 / BCRC 17059 / LMG 24140 / F1).